Reading from the N-terminus, the 300-residue chain is ATP-dependent (S)-NAD(P)H-hydrate dehydratase (300 aa).

In terms of domain architecture, YjeF C-terminal spans 7 to 289 (IEARLKSIIP…ESIPSVFDQV (283 aa)). (6S)-NADPHX-binding positions include Gly-107 and 160-166 (NVMEYRR). ATP-binding positions include 194-198 (KGQVD) and 213-222 (GSPRRCGGQG). Asp-223 contributes to the (6S)-NADPHX binding site.

Belongs to the NnrD/CARKD family. It depends on Mg(2+) as a cofactor.

The enzyme catalyses (6S)-NADHX + ATP = ADP + phosphate + NADH + H(+). The catalysed reaction is (6S)-NADPHX + ATP = ADP + phosphate + NADPH + H(+). Functionally, catalyzes the dehydration of the S-form of NAD(P)HX at the expense of ATP, which is converted to ADP. Together with NAD(P)HX epimerase, which catalyzes the epimerization of the S- and R-forms, the enzyme allows the repair of both epimers of NAD(P)HX, a damaged form of NAD(P)H that is a result of enzymatic or heat-dependent hydration. This is ATP-dependent (S)-NAD(P)H-hydrate dehydratase from Entamoeba histolytica (strain ATCC 30459 / HM-1:IMSS / ABRM).